Reading from the N-terminus, the 293-residue chain is MILLETVIVTGMSGAGKSLAIRAFEDMGFFCIDNLPPQFLPKIAELASASNDKISRIAAVIDIRGGELFDDFKDVLNDLKKGTYNFKVLFLDAHDNVLVQRYKETRRKHPLSFESDGSILEAIQKEREKLEDIKRYADFIIDTSTLSPRDLKEKLFEIFSAQRSRETMLITVMSFGFKYGLPLDADLVFDVRFIPNPFYVEELKHKTGKEKEVKEYVLKWDVTKEFLKKLFDLILFLIPNYAEEGKAQLVIAIGCTGGKHRSVTIAEELFELIKNNGYKASIFHRDIEKDIKG.

An ATP-binding site is contributed by 11–18 (GMSGAGKS). GTP is bound at residue 62-65 (DIRG).

The protein belongs to the RapZ-like family.

In terms of biological role, displays ATPase and GTPase activities. This is Nucleotide-binding protein Csac_1160 from Caldicellulosiruptor saccharolyticus (strain ATCC 43494 / DSM 8903 / Tp8T 6331).